Here is a 45-residue protein sequence, read N- to C-terminus: Small, acid-soluble spore protein P (45 aa).

Basic and acidic residues predominate over residues 1–12 (MTERHTAKDIRK). A disordered region spans residues 1-45 (MTERHTAKDIRKNAPKGENPGQPEPLSGSKKVKKRNHVSQTNGEG).

The protein belongs to the SspP family.

It localises to the spore core. The sequence is that of Small, acid-soluble spore protein P from Halalkalibacterium halodurans (strain ATCC BAA-125 / DSM 18197 / FERM 7344 / JCM 9153 / C-125) (Bacillus halodurans).